Here is a 207-residue protein sequence, read N- to C-terminus: Small ribosomal subunit protein uS7y (207 aa).

Ala2 carries the post-translational modification N-acetylalanine.

This sequence belongs to the universal ribosomal protein uS7 family. Expressed in root tips, lateral root primordia, leaf primordia, shoot apical meristem and vasculature of cotyledons.

The protein is Small ribosomal subunit protein uS7y of Arabidopsis thaliana (Mouse-ear cress).